The following is a 351-amino-acid chain: DNA polymerase IV (351 aa).

The region spanning 4 to 185 (IIHVDMDCFF…LPLAKIPGVG (182 aa)) is the UmuC domain. Residues Asp-8 and Asp-103 each coordinate Mg(2+). The active site involves Glu-104.

It belongs to the DNA polymerase type-Y family. In terms of assembly, monomer. It depends on Mg(2+) as a cofactor.

It is found in the cytoplasm. The enzyme catalyses DNA(n) + a 2'-deoxyribonucleoside 5'-triphosphate = DNA(n+1) + diphosphate. In terms of biological role, poorly processive, error-prone DNA polymerase involved in untargeted mutagenesis. Copies undamaged DNA at stalled replication forks, which arise in vivo from mismatched or misaligned primer ends. These misaligned primers can be extended by PolIV. Exhibits no 3'-5' exonuclease (proofreading) activity. May be involved in translesional synthesis, in conjunction with the beta clamp from PolIII. In Salmonella arizonae (strain ATCC BAA-731 / CDC346-86 / RSK2980), this protein is DNA polymerase IV.